Consider the following 572-residue polypeptide: Protein misato homolog 1 (572 aa).

Belongs to the misato family.

Its subcellular location is the mitochondrion outer membrane. The protein localises to the cytoplasm. In terms of biological role, involved in the regulation of mitochondrial distribution and morphology. Required for mitochondrial fusion and mitochondrial network formation. This chain is Protein misato homolog 1 (MSTO1), found in Bos taurus (Bovine).